We begin with the raw amino-acid sequence, 132 residues long: Small ribosomal subunit protein uS11 (132 aa).

The protein belongs to the universal ribosomal protein uS11 family. Part of the 30S ribosomal subunit.

Its function is as follows. Located on the platform of the 30S subunit. This is Small ribosomal subunit protein uS11 (rps11) from Korarchaeum cryptofilum (strain OPF8).